Consider the following 69-residue polypeptide: Probable molybdenum-pterin-binding protein (69 aa).

The region spanning 2 to 68 is the Mop domain; sequence KISARNQLKG…IKATSVMVGV (67 aa).

This sequence to C.pasteurianum MOP proteins.

Functionally, binds one mole of molybdenum per mole of protein and contains a pterin. This chain is Probable molybdenum-pterin-binding protein, found in Haemophilus influenzae (strain ATCC 51907 / DSM 11121 / KW20 / Rd).